A 246-amino-acid polypeptide reads, in one-letter code: Putative protein phosphatase 2C-type (246 aa).

One can recognise a PPM-type phosphatase domain in the interval Lys2–Asn240. The Mn(2+) site is built by Asp36, Gly37, Asp192, and Asp231.

Requires Mg(2+) as cofactor. It depends on Mn(2+) as a cofactor.

It catalyses the reaction O-phospho-L-seryl-[protein] + H2O = L-seryl-[protein] + phosphate. The enzyme catalyses O-phospho-L-threonyl-[protein] + H2O = L-threonyl-[protein] + phosphate. This Streptococcus pyogenes serotype M6 (strain ATCC BAA-946 / MGAS10394) protein is Putative protein phosphatase 2C-type.